Here is a 195-residue protein sequence, read N- to C-terminus: Molybdopterin synthase catalytic subunit (195 aa).

The interval 1–37 (MSARPEPQPGSERNATEPLPSHLDPTTYPRTLTTTHG) is disordered. A compositionally biased stretch (low complexity) spans 25 to 37 (PTTYPRTLTTTHG). Substrate is bound by residues 141–142 (HR), lysine 157, and 164–166 (KRE).

This sequence belongs to the MoaE family. MOCS2B subfamily. In terms of assembly, heterotetramer; composed of 2 small (MOCS2A) and 2 large (MOCS2B) subunits.

It is found in the cytoplasm. The catalysed reaction is 2 [molybdopterin-synthase sulfur-carrier protein]-C-terminal-Gly-aminoethanethioate + cyclic pyranopterin phosphate + H2O = molybdopterin + 2 [molybdopterin-synthase sulfur-carrier protein]-C-terminal Gly-Gly + 2 H(+). The protein operates within cofactor biosynthesis; molybdopterin biosynthesis. Functionally, catalytic subunit of the molybdopterin synthase complex, a complex that catalyzes the conversion of precursor Z into molybdopterin. Acts by mediating the incorporation of 2 sulfur atoms from thiocarboxylated MOCS2A into precursor Z to generate a dithiolene group. The chain is Molybdopterin synthase catalytic subunit from Emericella nidulans (strain FGSC A4 / ATCC 38163 / CBS 112.46 / NRRL 194 / M139) (Aspergillus nidulans).